The following is a 399-amino-acid chain: S-adenosylmethionine synthase (399 aa).

Histidine 17 contacts ATP. Aspartate 19 contacts Mg(2+). Glutamate 45 is a K(+) binding site. The L-methionine site is built by glutamate 58 and glutamine 101. A flexible loop region spans residues 101–111 (QSPDIAQGVDE). ATP contacts are provided by residues 177–179 (DAK), 244–245 (RF), aspartate 253, 259–260 (RK), alanine 276, and lysine 280. Residue aspartate 253 coordinates L-methionine. Residue lysine 284 coordinates L-methionine.

The protein belongs to the AdoMet synthase family. In terms of assembly, homotetramer; dimer of dimers. Mg(2+) is required as a cofactor. The cofactor is K(+).

Its subcellular location is the cytoplasm. The catalysed reaction is L-methionine + ATP + H2O = S-adenosyl-L-methionine + phosphate + diphosphate. Its pathway is amino-acid biosynthesis; S-adenosyl-L-methionine biosynthesis; S-adenosyl-L-methionine from L-methionine: step 1/1. In terms of biological role, catalyzes the formation of S-adenosylmethionine (AdoMet) from methionine and ATP. The overall synthetic reaction is composed of two sequential steps, AdoMet formation and the subsequent tripolyphosphate hydrolysis which occurs prior to release of AdoMet from the enzyme. This is S-adenosylmethionine synthase from Listeria welshimeri serovar 6b (strain ATCC 35897 / DSM 20650 / CCUG 15529 / CIP 8149 / NCTC 11857 / SLCC 5334 / V8).